The primary structure comprises 260 residues: Cytosolic Fe-S cluster assembly factor Nubp2 homolog (260 aa).

14–21 (GKGGVGKS) serves as a coordination point for ATP. [4Fe-4S] cluster contacts are provided by Cys-188 and Cys-191.

The protein belongs to the Mrp/NBP35 ATP-binding proteins family. NUBP2/CFD1 subfamily. As to quaternary structure, heterotetramer of 2 Nubp1 and 2 Nubp2 chains. [4Fe-4S] cluster serves as cofactor.

Its subcellular location is the cytoplasm. Functionally, component of the cytosolic iron-sulfur (Fe/S) protein assembly (CIA) machinery. Required for maturation of extramitochondrial Fe-S proteins. The Nubp1-Nubp2 heterotetramer forms a Fe-S scaffold complex, mediating the de novo assembly of an Fe-S cluster and its transfer to target apoproteins. In Drosophila simulans (Fruit fly), this protein is Cytosolic Fe-S cluster assembly factor Nubp2 homolog.